Reading from the N-terminus, the 147-residue chain is Large ribosomal subunit protein bL9 (147 aa).

A disordered region spans residues 44–63 (VKTLDAQKRSEDKRKEQEKL). A compositionally biased stretch (basic and acidic residues) spans 48–63 (DAQKRSEDKRKEQEKL).

This sequence belongs to the bacterial ribosomal protein bL9 family.

Binds to the 23S rRNA. The polypeptide is Large ribosomal subunit protein bL9 (Brevibacillus brevis (strain 47 / JCM 6285 / NBRC 100599)).